A 634-amino-acid chain; its full sequence is Chaperone protein HtpG (634 aa).

The a; substrate-binding stretch occupies residues 1 to 344 (MSETATQNKE…SNDLPLNVSR (344 aa)). The segment at 345-561 (EILQDNKVTQ…DFEMGTQMAK (217 aa)) is b. Residues 562–634 (LLEAAGQAAP…GAINELLTKR (73 aa)) form a c region.

The protein belongs to the heat shock protein 90 family. In terms of assembly, homodimer.

It is found in the cytoplasm. Functionally, molecular chaperone. Has ATPase activity. The protein is Chaperone protein HtpG of Vibrio atlanticus (strain LGP32) (Vibrio splendidus (strain Mel32)).